We begin with the raw amino-acid sequence, 303 residues long: N-acetyl-D-glucosamine kinase (303 aa).

ATP contacts are provided by residues 4–11 (GFDVGGTK) and 133–140 (GFGGGLIY). 4 residues coordinate Zn(2+): histidine 157, cysteine 177, cysteine 179, and cysteine 184.

This sequence belongs to the ROK (NagC/XylR) family. NagK subfamily.

The enzyme catalyses N-acetyl-D-glucosamine + ATP = N-acetyl-D-glucosamine 6-phosphate + ADP + H(+). The protein operates within cell wall biogenesis; peptidoglycan recycling. In terms of biological role, catalyzes the phosphorylation of N-acetyl-D-glucosamine (GlcNAc) derived from cell-wall degradation, yielding GlcNAc-6-P. The protein is N-acetyl-D-glucosamine kinase of Vibrio vulnificus (strain CMCP6).